The sequence spans 500 residues: NAD(P)H-quinone oxidoreductase chain 4, chloroplastic (500 aa).

Helical transmembrane passes span 3–23 (FFPW…IILF), 37–57 (ICIC…HFQL), 87–107 (IGPI…AWPV), 113–130 (LFHF…GLFA), 134–154 (LLLF…LLSM), 167–187 (FILY…GVGL), 208–228 (ALEI…SPII), 242–262 (HYST…YGLI), 272–292 (AHSI…IYAA), 305–325 (IAYS…SIND), 330–350 (GAIL…FLAG), 364–384 (MGGI…FSMA), 386–406 (LALP…GIIT), 411–431 (LLIS…LTPI), and 462–482 (LFVS…PDFV).

This sequence belongs to the complex I subunit 4 family.

Its subcellular location is the plastid. The protein localises to the chloroplast thylakoid membrane. The catalysed reaction is a plastoquinone + NADH + (n+1) H(+)(in) = a plastoquinol + NAD(+) + n H(+)(out). It catalyses the reaction a plastoquinone + NADPH + (n+1) H(+)(in) = a plastoquinol + NADP(+) + n H(+)(out). This Daucus carota (Wild carrot) protein is NAD(P)H-quinone oxidoreductase chain 4, chloroplastic.